Here is a 792-residue protein sequence, read N- to C-terminus: MTTQESIKPLVDRILSNPLQFNAAMISNKSNNNDTSAAPENSSYIVIGKQHNNNSNSTAIAATAESKQIKENNLIDRPNGKKTNTVPKSMAEALLLYTSKNDKDAADATGAKKSAELSTELSTEPPSSSSEDDKVGKEEEEEGEIFHEARDYVEPRKASLKERDNADKGDGEDIGEDIGEDIGEDIGEDIGEDIGENLGSPLATIDDSSNENEKEKRKELSTSISSDDEIEDDEDEDDMDYDSSAMEKELPEEEENDSSSKISEGEKKSLYQDLMENSTVEVNRYEPVNNTKENGNRNPKGEEEEEEEEELKHKSRSITPPVTISNLSNFYQFNENINDRGSLNSTRIVKNWGDKFTNLKPRGLLNHGVTCYTNAAVQAMLHIPSIQHYLFDILMGKYDSTISKNSVSYTLAETSKKMWLPVSKNPRKNVSASYINPKHLISRLDDINCMMSEWQQEDSHEYFMSLMSRLQEDSVPKGHKLIESIIYDIFGGLLKQIVTCKSCGSISKTEQPFYDLSLHLKGKKKLDPNSDLSSDSINGTSATTSTTTSNAATKPSLSSSSSVNLNNGSPFAAASDLSSANRRFSIEKSIKDFFNPELIKVDKEQKGYVCEKCHKTTNAVKHSSILRAPETLLVHLKKFRFNGTSSSKMKQAVSYPMFLDLTEYCESKELPVKYQLLSVVVHEGRSLSSGHYIAHCKQPDGSWATYDDEYINIISERDVLKEPNAYYLLYTRLTPKSVPLPLAKSAMATGNVTSKSKQEQAVNEPNNRPLKINSKKNNRKKWKKNKKRKFTK.

Residues 2–27 (TTQESIKPLVDRILSNPLQFNAAMIS) form a DHR2-binding module region. 2 disordered regions span residues 64-87 (AESKQIKENNLIDRPNGKKTNTVP) and 103-320 (KDAA…SITP). The span at 107-129 (DATGAKKSAELSTELSTEPPSSS) shows a compositional bias: low complexity. Positions 109–145 (TGAKKSAELSTELSTEPPSSSSEDDKVGKEEEEEGEI) are SIR4-binding module. Residues 144 to 171 (EIFHEARDYVEPRKASLKERDNADKGDG) show a composition bias toward basic and acidic residues. Residues 167 to 208 (DKGDGEDIGEDIGEDIGEDIGEDIGEDIGENLGSPLATIDDS) form a UTP22-binding module region. Acidic residues predominate over residues 172–195 (EDIGEDIGEDIGEDIGEDIGEDIG). Positions 211–220 (ENEKEKRKEL) are enriched in basic and acidic residues. Residues 226–241 (SDDEIEDDEDEDDMDY) are compositionally biased toward acidic residues. Residues 288 to 297 (VNNTKENGNR) are compositionally biased toward polar residues. The region spanning 362–733 (RGLLNHGVTC…NAYYLLYTRL (372 aa)) is the USP domain. Cysteine 371 acts as the Nucleophile in catalysis. Residues 526 to 563 (LDPNSDLSSDSINGTSATTSTTTSNAATKPSLSSSSSV) form a disordered region. Polar residues predominate over residues 530-539 (SDLSSDSING). The segment covering 540–563 (TSATTSTTTSNAATKPSLSSSSSV) has biased composition (low complexity). The active-site Proton acceptor is histidine 691. Over residues 749–766 (TGNVTSKSKQEQAVNEPN) the composition is skewed to polar residues. The interval 749–792 (TGNVTSKSKQEQAVNEPNNRPLKINSKKNNRKKWKKNKKRKFTK) is disordered. Basic residues predominate over residues 773 to 792 (NSKKNNRKKWKKNKKRKFTK).

This sequence belongs to the peptidase C19 family. As to quaternary structure, interacts with SIR4. Interacts with the proliferating-cell nuclear antigen PCNA/POL30. Interacts with DHR2 and UTP22.

The protein resides in the nucleus. It localises to the chromosome. It is found in the telomere. The protein localises to the nucleolus. The catalysed reaction is Thiol-dependent hydrolysis of ester, thioester, amide, peptide and isopeptide bonds formed by the C-terminal Gly of ubiquitin (a 76-residue protein attached to proteins as an intracellular targeting signal).. In terms of biological role, deubiquitinating enzyme involved in telomere and HM loci silencing, which is the repression of chromatin structure which leads to a stop in the transcription of nearby genes. Targets histone H2B for deubiquitination, thus helping to localize SIR2 to the telomere. At silent chromatin, including telomeres and the rDNA locus, not only maintains low H2B 'Lys-123' ubiquitination (H2BK123Ub), but also low H3 'Lys-4' and 'Lys-79' methylation (H3K4me and H3K79me, respectively). Controls the proliferating-cell nuclear antigen PCNA/POL30 deubiquitination which is crucial for keeping TLS polymerases in check as well as for down-regulating the error-free bypass. Deubiquitinates and stabilizes RPA190, the largest subunit of RNA polymerase I, to achieve optimal levels of ribosomes and cell growth. Also protects nutrient transporters such as GAP1 from ubiquitin-dependent endocytosis. This is Ubiquitin carboxyl-terminal hydrolase 10 (UBP10) from Saccharomyces cerevisiae (strain ATCC 204508 / S288c) (Baker's yeast).